Consider the following 548-residue polypeptide: 2-succinyl-5-enolpyruvyl-6-hydroxy-3-cyclohexene-1-carboxylate synthase (548 aa).

It belongs to the TPP enzyme family. MenD subfamily. Homodimer. Mg(2+) is required as a cofactor. It depends on Mn(2+) as a cofactor. The cofactor is thiamine diphosphate.

The catalysed reaction is isochorismate + 2-oxoglutarate + H(+) = 5-enolpyruvoyl-6-hydroxy-2-succinyl-cyclohex-3-ene-1-carboxylate + CO2. Its pathway is quinol/quinone metabolism; 1,4-dihydroxy-2-naphthoate biosynthesis; 1,4-dihydroxy-2-naphthoate from chorismate: step 2/7. The protein operates within quinol/quinone metabolism; menaquinone biosynthesis. Catalyzes the thiamine diphosphate-dependent decarboxylation of 2-oxoglutarate and the subsequent addition of the resulting succinic semialdehyde-thiamine pyrophosphate anion to isochorismate to yield 2-succinyl-5-enolpyruvyl-6-hydroxy-3-cyclohexene-1-carboxylate (SEPHCHC). The sequence is that of 2-succinyl-5-enolpyruvyl-6-hydroxy-3-cyclohexene-1-carboxylate synthase from Mycobacterium marinum (strain ATCC BAA-535 / M).